The chain runs to 165 residues: Nucleotide-binding protein RoseRS_0530 (165 aa).

It belongs to the YajQ family.

In terms of biological role, nucleotide-binding protein. The sequence is that of Nucleotide-binding protein RoseRS_0530 from Roseiflexus sp. (strain RS-1).